Consider the following 140-residue polypeptide: Large-conductance mechanosensitive channel 2 (140 aa).

3 consecutive transmembrane segments (helical) span residues 8–28 (FISK…AAFG), 30–50 (IVDS…FGGL), and 81–101 (GSFI…FLMV).

Belongs to the MscL family. In terms of assembly, homopentamer.

It localises to the cell inner membrane. Functionally, channel that opens in response to stretch forces in the membrane lipid bilayer. May participate in the regulation of osmotic pressure changes within the cell. The polypeptide is Large-conductance mechanosensitive channel 2 (Mesorhizobium japonicum (strain LMG 29417 / CECT 9101 / MAFF 303099) (Mesorhizobium loti (strain MAFF 303099))).